The following is a 370-amino-acid chain: Probable neutral protease 2 homolog ARB_03949 (370 aa).

The signal sequence occupies residues 1 to 19 (MQLVAALAALGALVAPAVA). Positions 20–188 (YPHAPMNETL…SIHSRALQKR (169 aa)) are excised as a propeptide. Cystine bridges form between C196/C267 and C274/C292. H316 is a binding site for Zn(2+). E317 is an active-site residue. 2 residues coordinate Zn(2+): H320 and D331.

Belongs to the peptidase M35 family. The cofactor is Zn(2+).

The protein localises to the secreted. The enzyme catalyses Preferential cleavage of bonds with hydrophobic residues in P1'. Also 3-Asn-|-Gln-4 and 8-Gly-|-Ser-9 bonds in insulin B chain.. Probable secreted metalloprotease that shows high activities on basic nuclear substrates such as histone and protamine. May be involved in virulence. The protein is Probable neutral protease 2 homolog ARB_03949 of Arthroderma benhamiae (strain ATCC MYA-4681 / CBS 112371) (Trichophyton mentagrophytes).